Here is a 725-residue protein sequence, read N- to C-terminus: Manganese-exporting P-type ATPase (725 aa).

One can recognise an HMA domain in the interval 25–92 (GRMRIQIEWV…AISGAAHVAA (68 aa)). 6 consecutive transmembrane segments (helical) span residues 101 to 119 (HSSDIRNIEVLRMAIGAAA), 142 to 160 (LVASGVTIFTGYPFLRGAL), 165 to 179 (TGTDALVSVATIASL), 188 to 202 (LAVLWLLNIGEYLQD), 335 to 359 (VGENFSRCFVPTSFVVSAITLAITK), and 365 to 383 (MTVLLIACPCAVGLATPTA). Asp-416 acts as the 4-aspartylphosphate intermediate in catalysis. Positions 416, 418, and 618 each coordinate Mg(2+). 2 consecutive transmembrane segments (helical) span residues 669 to 688 (AVEVIRENYGMSIAVNAAGL) and 698 to 717 (PVLAAVLHNASSVAVVANSS).

Belongs to the cation transport ATPase (P-type) (TC 3.A.3) family. Type IB subfamily.

The protein localises to the cell membrane. The enzyme catalyses Mn(2+)(in) + ATP + H2O = Mn(2+)(out) + ADP + phosphate + H(+). Functionally, high affinity, slow turnover Mn(2+) transporting ATPase. The chain is Manganese-exporting P-type ATPase (ctpC) from Mycobacterium leprae (strain TN).